A 213-amino-acid chain; its full sequence is Probable GH family 25 lysozyme 4 (213 aa).

An N-terminal signal peptide occupies residues 1 to 19 (MRLFLLLITFIALFGAINA). The region spanning 21-213 (SGVDISQGSS…VGYDFNWYPN (193 aa)) is the Ch-type lysozyme domain. Catalysis depends on residues Asp-24, Asp-112, and Glu-114.

It belongs to the glycosyl hydrolase 25 family.

The protein resides in the secreted. The enzyme catalyses Hydrolysis of (1-&gt;4)-beta-linkages between N-acetylmuramic acid and N-acetyl-D-glucosamine residues in a peptidoglycan and between N-acetyl-D-glucosamine residues in chitodextrins.. The chain is Probable GH family 25 lysozyme 4 from Dictyostelium discoideum (Social amoeba).